Reading from the N-terminus, the 177-residue chain is Protein LIGHT-DEPENDENT SHORT HYPOCOTYLS 10 (177 aa).

Basic and acidic residues predominate over residues 1–10 (MSSPRERGKS). 2 disordered regions span residues 1 to 31 (MSSPRERGKSLMESSGSEPPVTPSRYESQKR) and 144 to 177 (RGIPYKKKKKKKPTPEMGGGREDSSSSSSSFSFS). The ALOG domain occupies 25–152 (RYESQKRRDW…ARGIPYKKKK (128 aa)). Residues 150–154 (KKKKK) carry the Nuclear localization signal motif. Over residues 168-177 (SSSSSSFSFS) the composition is skewed to low complexity.

It belongs to the plant homeotic and developmental regulators ALOG protein family.

Its subcellular location is the nucleus. Its function is as follows. Probable transcription regulator that acts as a developmental regulator by promoting cell growth in response to light. The chain is Protein LIGHT-DEPENDENT SHORT HYPOCOTYLS 10 (LSH10) from Arabidopsis thaliana (Mouse-ear cress).